Here is a 340-residue protein sequence, read N- to C-terminus: Protein FAM50A-A (340 aa).

Disordered stretches follow at residues 1–22 (MAQY…KKRE) and 123–178 (NLEE…EEEN). A compositionally biased stretch (acidic residues) spans 124 to 146 (LEEDEECEDEEGEEEESDKEDPP). Over residues 169–178 (PDRDREEEEN) the composition is skewed to basic and acidic residues.

Its subcellular location is the nucleus. Functionally, probably involved in the regulation of pre-mRNA splicing. The polypeptide is Protein FAM50A-A (fam50a-a) (Xenopus laevis (African clawed frog)).